Consider the following 327-residue polypeptide: Urease accessory protein 4 (327 aa).

N-linked (GlcNAc...) asparagine glycosylation is present at asparagine 120. Residues valine 239–tyrosine 259 form a helical membrane-spanning segment.

This sequence belongs to the UreD family. As to quaternary structure, URE4, URE6 and URE7 may form a complex that acts as a GTP-hydrolysis-dependent molecular chaperone, activating the urease apoprotein URE1.

It is found in the membrane. Its function is as follows. Urease accessory protein required for the maturation and activation of urease via the functional incorporation of the urease nickel metallocenter. Plays a role in host brain invasion. The sequence is that of Urease accessory protein 4 from Cryptococcus neoformans var. grubii serotype A (strain H99 / ATCC 208821 / CBS 10515 / FGSC 9487) (Filobasidiella neoformans var. grubii).